A 111-amino-acid chain; its full sequence is Cell division protein FtsB (111 aa).

The Cytoplasmic segment spans residues 1–3 (MRL). A helical transmembrane segment spans residues 4 to 21 (ITLFLLLLLLAIQYPLWL). At 22–111 (GKGGWLRVWD…PPPAGQQAHH (90 aa)) the chain is on the periplasmic side. Residues 31–64 (DMQKQVTAQNQRNAELKQRNTKLEGEVKDLKEGT) are a coiled coil. The tract at residues 89–111 (APAPKTSETPLPPPPPAGQQAHH) is disordered.

The protein belongs to the FtsB family. As to quaternary structure, part of a complex composed of FtsB, FtsL and FtsQ.

It localises to the cell inner membrane. Its function is as follows. Essential cell division protein. May link together the upstream cell division proteins, which are predominantly cytoplasmic, with the downstream cell division proteins, which are predominantly periplasmic. The chain is Cell division protein FtsB from Ralstonia pickettii (strain 12J).